Here is a 740-residue protein sequence, read N- to C-terminus: Phosphoribosylformylglycinamidine synthase subunit PurL (740 aa).

The active site involves histidine 55. Residues tyrosine 58 and lysine 97 each coordinate ATP. Glutamate 99 serves as a coordination point for Mg(2+). Residues 100–103 (SHNH) and arginine 122 contribute to the substrate site. Histidine 101 serves as the catalytic Proton acceptor. Aspartate 123 lines the Mg(2+) pocket. Glutamine 246 provides a ligand contact to substrate. Aspartate 276 contacts Mg(2+). 320 to 322 (ESQ) contributes to the substrate binding site. Residues aspartate 501 and glycine 538 each contribute to the ATP site. Mg(2+) is bound at residue asparagine 539. Serine 541 is a binding site for substrate.

It belongs to the FGAMS family. Monomer. Part of the FGAM synthase complex composed of 1 PurL, 1 PurQ and 2 PurS subunits.

The protein resides in the cytoplasm. The enzyme catalyses N(2)-formyl-N(1)-(5-phospho-beta-D-ribosyl)glycinamide + L-glutamine + ATP + H2O = 2-formamido-N(1)-(5-O-phospho-beta-D-ribosyl)acetamidine + L-glutamate + ADP + phosphate + H(+). The protein operates within purine metabolism; IMP biosynthesis via de novo pathway; 5-amino-1-(5-phospho-D-ribosyl)imidazole from N(2)-formyl-N(1)-(5-phospho-D-ribosyl)glycinamide: step 1/2. Part of the phosphoribosylformylglycinamidine synthase complex involved in the purines biosynthetic pathway. Catalyzes the ATP-dependent conversion of formylglycinamide ribonucleotide (FGAR) and glutamine to yield formylglycinamidine ribonucleotide (FGAM) and glutamate. The FGAM synthase complex is composed of three subunits. PurQ produces an ammonia molecule by converting glutamine to glutamate. PurL transfers the ammonia molecule to FGAR to form FGAM in an ATP-dependent manner. PurS interacts with PurQ and PurL and is thought to assist in the transfer of the ammonia molecule from PurQ to PurL. The protein is Phosphoribosylformylglycinamidine synthase subunit PurL of Lacticaseibacillus casei (Lactobacillus casei).